We begin with the raw amino-acid sequence, 430 residues long: Serine--tRNA ligase (430 aa).

An L-serine-binding site is contributed by 235–237 (TAE). Residues 266-268 (RRE) and Val282 contribute to the ATP site. Glu289 serves as a coordination point for L-serine. ATP is bound at residue 353 to 356 (EASS). Ser389 serves as a coordination point for L-serine.

This sequence belongs to the class-II aminoacyl-tRNA synthetase family. Type-1 seryl-tRNA synthetase subfamily. In terms of assembly, homodimer. The tRNA molecule binds across the dimer.

It is found in the cytoplasm. It catalyses the reaction tRNA(Ser) + L-serine + ATP = L-seryl-tRNA(Ser) + AMP + diphosphate + H(+). The catalysed reaction is tRNA(Sec) + L-serine + ATP = L-seryl-tRNA(Sec) + AMP + diphosphate + H(+). It participates in aminoacyl-tRNA biosynthesis; selenocysteinyl-tRNA(Sec) biosynthesis; L-seryl-tRNA(Sec) from L-serine and tRNA(Sec): step 1/1. Functionally, catalyzes the attachment of serine to tRNA(Ser). Is also able to aminoacylate tRNA(Sec) with serine, to form the misacylated tRNA L-seryl-tRNA(Sec), which will be further converted into selenocysteinyl-tRNA(Sec). The sequence is that of Serine--tRNA ligase from Chlorobium luteolum (strain DSM 273 / BCRC 81028 / 2530) (Pelodictyon luteolum).